The chain runs to 419 residues: Carboxypeptidase A1 (419 aa).

Positions methionine 1–glycine 16 are cleaved as a signal peptide. A propeptide spans lysine 17–arginine 110 (activation peptide). The region spanning threonine 121 to threonine 414 is the Peptidase M14 domain. Residues histidine 179 and glutamate 182 each contribute to the Zn(2+) site. Residues histidine 179–glutamate 182, arginine 237, and asparagine 254–arginine 255 contribute to the substrate site. The cysteines at positions 248 and 271 are disulfide-linked. Residue histidine 306 coordinates Zn(2+). Residues serine 307 to tyrosine 308 and tyrosine 358 contribute to the substrate site. The active-site Proton donor/acceptor is glutamate 380.

Belongs to the peptidase M14 family. As to quaternary structure, monomer. May form a complex with proelastase 2. Zn(2+) serves as cofactor.

The protein localises to the secreted. It catalyses the reaction Release of a C-terminal amino acid, but little or no action with -Asp, -Glu, -Arg, -Lys or -Pro.. The catalysed reaction is leukotriene C4 + H2O = leukotriene F4 + glycine. Its activity is regulated as follows. Inhibited by interaction with the S.magnifica carboxypeptidase inhibitor SmCI. In terms of biological role, carboxypeptidase that catalyzes the release of a C-terminal amino acid, but has little or no action with -Asp, -Glu, -Arg, -Lys or -Pro. Catalyzes the conversion of leukotriene C4 to leukotriene F4 via the hydrolysis of an amide bond. The chain is Carboxypeptidase A1 from Homo sapiens (Human).